We begin with the raw amino-acid sequence, 157 residues long: Lipoprotein signal peptidase (157 aa).

4 consecutive transmembrane segments (helical) span residues 10-30 (LVFI…KHAI), 36-56 (YESL…FSLL), 58-78 (FLEG…FIFL), and 84-104 (LFKN…SNVL). Residues Asp-114 and Asp-131 contribute to the active site. Residues 122-142 (FDFAIFNFADVMIDVGVGVLL) traverse the membrane as a helical segment.

The protein belongs to the peptidase A8 family.

It is found in the cell inner membrane. The catalysed reaction is Release of signal peptides from bacterial membrane prolipoproteins. Hydrolyzes -Xaa-Yaa-Zaa-|-(S,diacylglyceryl)Cys-, in which Xaa is hydrophobic (preferably Leu), and Yaa (Ala or Ser) and Zaa (Gly or Ala) have small, neutral side chains.. The protein operates within protein modification; lipoprotein biosynthesis (signal peptide cleavage). Its function is as follows. This protein specifically catalyzes the removal of signal peptides from prolipoproteins. This is Lipoprotein signal peptidase from Helicobacter pylori (strain P12).